A 1404-amino-acid chain; its full sequence is Probable GPI-anchored adhesin-like protein PGA55 (1404 aa).

The first 19 residues, 1–19, serve as a signal peptide directing secretion; that stretch reads MVLLCKYKVSWVFVLSVAG. 87 consecutive repeat copies span residues 104–109, 136–141, 156–161, 162–167, 183–188, 196–201, 203–208, 209–214, 216–221, 222–227, 228–233, 234–239, 247–252, 253–258, 261–266, 267–272, 274–279, 280–285, 286–291, 292–297, 298–303, 304–309, 317–322, 324–329, 330–335, 336–341, 343–348, 349–354, 355–360, 361–366, 374–379, 380–385, 388–393, 394–399, 401–406, 407–412, 413–418, 419–424, 425–430, 431–436, 444–449, 450–455, 457–462, 463–468, 469–474, 475–480, 488–493, 494–500, 502–507, 508–513, 515–520, 521–526, 527–532, 533–538, 546–551, 552–557, 560–565, 566–571, 573–578, 579–584, 585–590, 591–596, 604–609, 611–616, 617–622, 623–628, 629–634, 635–640, 641–646, 654–659, 660–665, 668–673, 674–679, 681–686, 687–692, 693–698, 699–704, 712–717, 719–724, 725–730, 731–736, 737–742, 743–748, 749–754, 771–776, 777–782, and 797–802. Residues 104–541 are 88 X 6 AA approximate tandem repeats; it reads VSSSSSEVIS…EVSSSSQVTS (438 aa). Residues 113–833 form a disordered region; sequence SSSSEEASSS…VSSSSASSEV (721 aa). N-linked (GlcNAc...) asparagine glycosylation occurs at Asn817. A 1-88 repeat occupies 824–829; the sequence is VSSSSA. N-linked (GlcNAc...) asparagine glycosylation is found at Asn994 and Asn1074. Asn1382 carries GPI-anchor amidated asparagine lipidation. Positions 1383–1404 are cleaved as a propeptide — removed in mature form; the sequence is AASRQSFNYKFIVGLILAYIIA.

Its subcellular location is the cell membrane. Its function is as follows. Predicted GPI-anchored adhesin-like protein which may be involved in filamentous growth and chlamydospore formation. In Candida albicans (strain SC5314 / ATCC MYA-2876) (Yeast), this protein is Probable GPI-anchored adhesin-like protein PGA55 (PGA55).